The primary structure comprises 92 residues: RNA-binding protein Hfq (92 aa).

A Sm domain is found at 9–68 (DPFLNALRRERVPVSVYLVNGIKLQGTIESFDQFVVLLRNTVSQMVYKHAISTVVPARNV). The segment at 73–92 (GGGYVQSNEGNQAEDDDVEQ) is disordered.

Belongs to the Hfq family. Homohexamer.

Its function is as follows. RNA chaperone that binds small regulatory RNA (sRNAs) and mRNAs to facilitate mRNA translational regulation in response to envelope stress, environmental stress and changes in metabolite concentrations. Also binds with high specificity to tRNAs. This chain is RNA-binding protein Hfq, found in Xanthomonas axonopodis pv. citri (strain 306).